A 189-amino-acid chain; its full sequence is Peptidyl-tRNA hydrolase (189 aa).

A tRNA-binding site is contributed by Tyr-15. Catalysis depends on His-20, which acts as the Proton acceptor. Residues Phe-66, Asn-68, and Asn-114 each contribute to the tRNA site.

This sequence belongs to the PTH family. In terms of assembly, monomer.

Its subcellular location is the cytoplasm. It carries out the reaction an N-acyl-L-alpha-aminoacyl-tRNA + H2O = an N-acyl-L-amino acid + a tRNA + H(+). Hydrolyzes ribosome-free peptidyl-tRNAs (with 1 or more amino acids incorporated), which drop off the ribosome during protein synthesis, or as a result of ribosome stalling. Its function is as follows. Catalyzes the release of premature peptidyl moieties from peptidyl-tRNA molecules trapped in stalled 50S ribosomal subunits, and thus maintains levels of free tRNAs and 50S ribosomes. The sequence is that of Peptidyl-tRNA hydrolase from Streptococcus pneumoniae serotype 2 (strain D39 / NCTC 7466).